Reading from the N-terminus, the 138-residue chain is Small ribosomal subunit protein uS11c (138 aa).

It belongs to the universal ribosomal protein uS11 family. As to quaternary structure, part of the 30S ribosomal subunit.

Its subcellular location is the plastid. It is found in the chloroplast. The protein is Small ribosomal subunit protein uS11c of Phaseolus vulgaris (Kidney bean).